Consider the following 436-residue polypeptide: Glutamyl-tRNA(Gln) amidotransferase subunit D (436 aa).

Residues 91–420 (QNISIISTGG…GEVAKLMNKN (330 aa)) enclose the Asparaginase/glutaminase domain. Active-site residues include threonine 101, threonine 177, aspartate 178, and lysine 254.

It belongs to the asparaginase 1 family. GatD subfamily. As to quaternary structure, heterodimer of GatD and GatE.

The catalysed reaction is L-glutamyl-tRNA(Gln) + L-glutamine + ATP + H2O = L-glutaminyl-tRNA(Gln) + L-glutamate + ADP + phosphate + H(+). Allows the formation of correctly charged Gln-tRNA(Gln) through the transamidation of misacylated Glu-tRNA(Gln) in organisms which lack glutaminyl-tRNA synthetase. The reaction takes place in the presence of glutamine and ATP through an activated gamma-phospho-Glu-tRNA(Gln). The GatDE system is specific for glutamate and does not act on aspartate. The polypeptide is Glutamyl-tRNA(Gln) amidotransferase subunit D (Methanobrevibacter smithii (strain ATCC 35061 / DSM 861 / OCM 144 / PS)).